The following is a 693-amino-acid chain: Putative adenosylcobalamin-dependent ribonucleoside-triphosphate reductase (693 aa).

The cysteines at positions 90 and 386 are disulfide-linked. Catalysis depends on residues C375 and E377.

This sequence belongs to the class II ribonucleoside-triphosphate reductase family. Adenosylcob(III)alamin is required as a cofactor.

It catalyses the reaction a 2'-deoxyribonucleoside 5'-triphosphate + [thioredoxin]-disulfide + H2O = a ribonucleoside 5'-triphosphate + [thioredoxin]-dithiol. This is Putative adenosylcobalamin-dependent ribonucleoside-triphosphate reductase (50) from Mycobacterium phage D29 (Mycobacteriophage D29).